We begin with the raw amino-acid sequence, 455 residues long: Bifunctional protein GlmU (455 aa).

Positions 1–225 (MEVVILAAGQ…IWETLGVNSK (225 aa)) are pyrophosphorylase. UDP-N-acetyl-alpha-D-glucosamine contacts are provided by residues 6-9 (LAAG), Lys20, Gln71, 76-77 (GT), 98-100 (YGD), Gly135, Glu150, Asn165, and Asn223. Residue Asp100 participates in Mg(2+) binding. Mg(2+) is bound at residue Asn223. Residues 226–246 (AQLAELERLHQRNIATRLMED) are linker. Positions 247–455 (GVTLFDPSRI…KRPVKKKAGE (209 aa)) are N-acetyltransferase. The UDP-N-acetyl-alpha-D-glucosamine site is built by Arg329 and Lys347. Residue His359 is the Proton acceptor of the active site. UDP-N-acetyl-alpha-D-glucosamine contacts are provided by Tyr362 and Asn373. Residues Ala376, 382–383 (NY), Ser401, Ala419, and Arg436 each bind acetyl-CoA.

This sequence in the N-terminal section; belongs to the N-acetylglucosamine-1-phosphate uridyltransferase family. The protein in the C-terminal section; belongs to the transferase hexapeptide repeat family. In terms of assembly, homotrimer. The cofactor is Mg(2+).

It is found in the cytoplasm. It carries out the reaction alpha-D-glucosamine 1-phosphate + acetyl-CoA = N-acetyl-alpha-D-glucosamine 1-phosphate + CoA + H(+). It catalyses the reaction N-acetyl-alpha-D-glucosamine 1-phosphate + UTP + H(+) = UDP-N-acetyl-alpha-D-glucosamine + diphosphate. It participates in nucleotide-sugar biosynthesis; UDP-N-acetyl-alpha-D-glucosamine biosynthesis; N-acetyl-alpha-D-glucosamine 1-phosphate from alpha-D-glucosamine 6-phosphate (route II): step 2/2. The protein operates within nucleotide-sugar biosynthesis; UDP-N-acetyl-alpha-D-glucosamine biosynthesis; UDP-N-acetyl-alpha-D-glucosamine from N-acetyl-alpha-D-glucosamine 1-phosphate: step 1/1. It functions in the pathway bacterial outer membrane biogenesis; LPS lipid A biosynthesis. Catalyzes the last two sequential reactions in the de novo biosynthetic pathway for UDP-N-acetylglucosamine (UDP-GlcNAc). The C-terminal domain catalyzes the transfer of acetyl group from acetyl coenzyme A to glucosamine-1-phosphate (GlcN-1-P) to produce N-acetylglucosamine-1-phosphate (GlcNAc-1-P), which is converted into UDP-GlcNAc by the transfer of uridine 5-monophosphate (from uridine 5-triphosphate), a reaction catalyzed by the N-terminal domain. This is Bifunctional protein GlmU from Aromatoleum aromaticum (strain DSM 19018 / LMG 30748 / EbN1) (Azoarcus sp. (strain EbN1)).